We begin with the raw amino-acid sequence, 260 residues long: Coiled-coil domain-containing protein 127 (260 aa).

Residues 49–135 (QKEVEKEREA…QVMQEKRQVQ (87 aa)) adopt a coiled-coil conformation.

In Homo sapiens (Human), this protein is Coiled-coil domain-containing protein 127 (CCDC127).